The following is a 406-amino-acid chain: L-cysteine:1D-myo-inositol 2-amino-2-deoxy-alpha-D-glucopyranoside ligase (406 aa).

C45 provides a ligand contact to Zn(2+). L-cysteinyl-5'-AMP contacts are provided by residues 45-48, T60, and 83-85; these read CGIT and NIT. A 'HIGH' region motif is present at residues 47–57; the sequence is ITPYDATHMGH. Residues 185-190 carry the 'ERGGDP' region motif; sequence ERGGDP. Residue W225 participates in L-cysteinyl-5'-AMP binding. C229 provides a ligand contact to Zn(2+). Position 247–249 (247–249) interacts with L-cysteinyl-5'-AMP; sequence GSD. H254 provides a ligand contact to Zn(2+). V281 contributes to the L-cysteinyl-5'-AMP binding site. The 'KMSKS' region signature appears at 287-291; the sequence is KMSKS.

It belongs to the class-I aminoacyl-tRNA synthetase family. MshC subfamily. In terms of assembly, monomer. It depends on Zn(2+) as a cofactor.

The catalysed reaction is 1D-myo-inositol 2-amino-2-deoxy-alpha-D-glucopyranoside + L-cysteine + ATP = 1D-myo-inositol 2-(L-cysteinylamino)-2-deoxy-alpha-D-glucopyranoside + AMP + diphosphate + H(+). In terms of biological role, catalyzes the ATP-dependent condensation of GlcN-Ins and L-cysteine to form L-Cys-GlcN-Ins. This chain is L-cysteine:1D-myo-inositol 2-amino-2-deoxy-alpha-D-glucopyranoside ligase, found in Kribbella flavida (strain DSM 17836 / JCM 10339 / NBRC 14399).